Consider the following 502-residue polypeptide: MAAQRRSLLQSEQQPSWTDDLPLCHLSGVGSASNRSYSADGKGTESHPPEDNWLKFRSENNCFLYGVFNGYDGNRVTNFVAQRLSAELLLGQLNTEHTEADVRRVLLQAFDVVERSFLESIDDALAEKASLQSQLPEGVPQHQLPPQYQKILERLKALEREISGGAMAVVAVLLNSKLYVANVGTNRALLCKSTVDGLQVTQLNMDHTTENEDELFRLSQLGLDAGKIKQMGVICGQESTRRIGDYKVKYGYTDIDLLSAAKSKPIIAEPEIHGAQPLDGVTGFLVLMSEGLYKALEAAHGPGQANQEIAAMIDTEFAKQTSLDAVAQAVVDRVKRIHSDTFASGGERAKFCPRHEDMTLLVRNFGYPLGEMSQPTPTPAPGGRVYPVSVPYSSAQSTSKTSVTLSLVMPSQGQMVNGSHSASTLDEATPTLTNQSPTLTLQSTNTHTQSSSSSSDGGLFRSRPAHSLPPGEDGRVEPYVDFAEFYRLWSVDHGEQSVMTAP.

Residues 1–21 (MAAQRRSLLQSEQQPSWTDDL) are disordered. At S7 the chain carries Phosphoserine. Positions 7 to 17 (SLLQSEQQPSW) are enriched in polar residues. The PPM-type phosphatase domain maps to 28–365 (GVGSASNRSY…EDMTLLVRNF (338 aa)). S393 carries O-linked (GlcNAc) serine glycosylation. Residues 414–437 (QMVNGSHSASTLDEATPTLTNQSP) are compositionally biased toward polar residues. The tract at residues 414 to 476 (QMVNGSHSAS…SLPPGEDGRV (63 aa)) is disordered. The residue at position 421 (S421) is a Phosphoserine. The residue at position 429 (T429) is a Phosphothreonine. S436 carries the post-translational modification Phosphoserine. Residues 438–455 (TLTLQSTNTHTQSSSSSS) are compositionally biased toward low complexity. At T440 the chain carries Phosphothreonine.

As to quaternary structure, interacts with XIAP and BIRC7. Interacts with TRAF6 and MAP3K7; during IL-1 signaling. Identified in the TRIKA2 complex composed of MAP3K7, TAB1 and TAB2. Interacts with TRAF6 and MAPK14; these interactions allow MAPK14 autophosphorylation. Interacts with STING1; interaction takes place following cGAMP activation and promotes TAB1 recruitment to the endoplasmic reticulum, triggering MAP3K7/TAK1 activation and STING1 phosphorylation. In terms of processing, phosphorylated at all three sites Ser-421, Thr-429 and Ser-436 by MAPK14 when cells were exposed to cellular stresses, or stimulated with TNF-alpha, IL1 or LPS. These phosphorylations inhibit TAK1 activation by a feedback control mechanism. Dephosphorylated by DUSP14 at Ser-436, leading to TAB1-MAP3K7/TAK1 complex inactivation in T-cells. Post-translationally, ubiquitinated by MAP3K1 with 'Lys-63'-linked polyubiquitin; leading to activation of TAK1 and of JNK and p38 MAP kinases following EGF and TGF-beta stimulation. Ubiquitinated by ITCH with 'Lys-48'-linked polyubiquitin; leading to proteasomal degradation. Ubiquitinated by RNF114 during maternal-to-zygotic transition; leading to degradation. O-GlcNAcylated at Ser-393 is required for full MAP3K7/TAK1 activation upon stimulation with IL-1 or osmotic stress.

The protein resides in the cytoplasm. The protein localises to the cytosol. It localises to the endoplasmic reticulum membrane. Its function is as follows. Key adapter protein that plays an essential role in JNK and NF-kappa-B activation and proinflammatory cytokines production in response to stimulation with TLRs and cytokines. Mechanistically, associates with the catalytic domain of MAP3K7/TAK1 to trigger MAP3K7/TAK1 autophosphorylation leading to its full activation. Similarly, associates with MAPK14 and triggers its autophosphorylation and subsequent activation. In turn, MAPK14 phosphorylates TAB1 and inhibits MAP3K7/TAK1 activation in a feedback control mechanism. Also plays a role in recruiting MAPK14 to the TAK1 complex for the phosphorylation of the TAB2 and TAB3 regulatory subunits. This is TGF-beta-activated kinase 1 and MAP3K7-binding protein 1 (Tab1) from Mus musculus (Mouse).